Here is a 266-residue protein sequence, read N- to C-terminus: Phosphatidate cytidylyltransferase (266 aa).

The next 8 helical transmembrane spans lie at 16 to 36, 52 to 72, 78 to 98, 101 to 121, 125 to 145, 164 to 184, 186 to 206, and 237 to 257; these read VVLI…LFWA, LFQV…WVAA, PVEC…YQKA, SEAI…FGVY, GAVA…GAFF, LEGA…VGMG, LSGG…MAVF, and LDSM…LEIW.

This sequence belongs to the CDS family.

The protein localises to the cell inner membrane. The catalysed reaction is a 1,2-diacyl-sn-glycero-3-phosphate + CTP + H(+) = a CDP-1,2-diacyl-sn-glycerol + diphosphate. Its pathway is phospholipid metabolism; CDP-diacylglycerol biosynthesis; CDP-diacylglycerol from sn-glycerol 3-phosphate: step 3/3. This is Phosphatidate cytidylyltransferase (cdsA) from Helicobacter pylori (strain J99 / ATCC 700824) (Campylobacter pylori J99).